A 158-amino-acid polypeptide reads, in one-letter code: Protein OPG060 (158 aa).

The protein belongs to the orthopoxvirus OPG058 family.

This Cynomys gunnisoni (Gunnison's prairie dog) protein is Protein OPG060 (OPG060).